Here is a 474-residue protein sequence, read N- to C-terminus: Cysteine--tRNA ligase (474 aa).

Cys-27 is a binding site for Zn(2+). The short motif at 29–39 (PTVYNYIHIGN) is the 'HIGH' region element. Positions 212, 237, and 241 each coordinate Zn(2+). A 'KMSKS' region motif is present at residues 271–275 (KMSKS). Lys-274 lines the ATP pocket.

It belongs to the class-I aminoacyl-tRNA synthetase family. Monomer. Zn(2+) serves as cofactor.

Its subcellular location is the cytoplasm. The catalysed reaction is tRNA(Cys) + L-cysteine + ATP = L-cysteinyl-tRNA(Cys) + AMP + diphosphate. This Lactobacillus delbrueckii subsp. bulgaricus (strain ATCC BAA-365 / Lb-18) protein is Cysteine--tRNA ligase.